Reading from the N-terminus, the 445-residue chain is MREIVHIQAGQCGNQIGAKFWEVISDEHGIDPSGTYSGDSDLQLERVDVFYNEATGGRYVPRAILMDLEPGTMDSVRAGPFGQLFRPDNFVFGQTGAGNNWAKGHYTEGAELIDAVLDVLRKEAEGCDCLQGFQITHSLGGGTGSGMGTLLISKIREEYPDRIMETFSVFPSPKVSDTVVEPYNATLSVHQLVENADEVQVIDNEALYDICFRTLKLTTPTYGDLNHLVSAAMSGVTCSLRFPGQLNSDLRKLAVNLIPFPRLHFFMYGFAPLTSRGSQQYRALTVPELTQQMFDAKNMMCTSDPRHGRYLTACAMFRGRMSTKEVDEQMLNVQNKNSSYFVEWIPHNTKSSVCDIPPLGLKMAVTFVGNSTAIQEMFKRVSDQFTAMFRRKAFLHWYTGEGMDEMEFTEAESNMNDLVSEYQQYQDATAEEEGEFEEEEGDVEA.

8 residues coordinate GTP: glutamine 11, glutamate 69, serine 138, glycine 142, threonine 143, glycine 144, asparagine 204, and asparagine 226. Glutamate 69 serves as a coordination point for Mg(2+). The segment at 426-445 is disordered; it reads QDATAEEEGEFEEEEGDVEA. Acidic residues predominate over residues 429-445; sequence TAEEEGEFEEEEGDVEA.

The protein belongs to the tubulin family. In terms of assembly, dimer of alpha and beta chains. A typical microtubule is a hollow water-filled tube with an outer diameter of 25 nm and an inner diameter of 15 nM. Alpha-beta heterodimers associate head-to-tail to form protofilaments running lengthwise along the microtubule wall with the beta-tubulin subunit facing the microtubule plus end conferring a structural polarity. Microtubules usually have 13 protofilaments but different protofilament numbers can be found in some organisms and specialized cells. Interacts with DCX/apicortin; the interaction stabilizes microtubule assembly. It depends on Mg(2+) as a cofactor.

Its subcellular location is the cytoplasm. It is found in the cytoskeleton. Tubulin is the major constituent of microtubules, a cylinder consisting of laterally associated linear protofilaments composed of alpha- and beta-tubulin heterodimers. Microtubules grow by the addition of GTP-tubulin dimers to the microtubule end, where a stabilizing cap forms. Below the cap, tubulin dimers are in GDP-bound state, owing to GTPase activity of alpha-tubulin. The polypeptide is Tubulin beta chain (Plasmodium falciparum).